The following is a 587-amino-acid chain: GATA zinc finger domain-containing protein 3 (587 aa).

A compositionally biased stretch (low complexity) spans 53-74 (NINNNINNNNNNNNNNNNNNIN). Disordered regions lie at residues 53–141 (NINN…LKIP), 179–294 (QLAH…SSPS), and 312–392 (QTSP…ATIN). Residues 75–86 (QYHQNHYDQYSD) are compositionally biased toward polar residues. Composition is skewed to low complexity over residues 87 to 136 (NNCN…NNNN), 183 to 202 (NSSM…TPTS), 237 to 264 (NING…INNG), 272 to 292 (GNNN…NSSS), and 316 to 333 (SQQS…QQSQ). Polar residues-rich tracts occupy residues 340 to 358 (INTT…TNSP) and 365 to 379 (NESS…TPLS). The GATA-type zinc finger occupies 500 to 525 (CIFCGTMETPEWRKGPGGHKTLCNAC). Residues 536–587 (ENQNNGGSPNPQQNNVTTTTTTTTSTSTNSPNSNGNNFSPESAMSVSKLISD) form a disordered region. Positions 538–575 (QNNGGSPNPQQNNVTTTTTTTTSTSTNSPNSNGNNFSP) are enriched in low complexity. A compositionally biased stretch (polar residues) spans 577-587 (SAMSVSKLISD).

This chain is GATA zinc finger domain-containing protein 3 (gtaC), found in Dictyostelium discoideum (Social amoeba).